Here is a 410-residue protein sequence, read N- to C-terminus: MAKKKEFRQAEVNIGMVGHVDHGKTTLTKALTGIWTDTHSEELRRGITIKIGFADAEIRKCPHCGKYSTSPVCPYCGHETEFERRVSFIDAPGHEALMTTMLAGASLMDGAVLVIAANEGVMPQTREHLMALQIVGNRNIVIALNKIELVDREKVMERYQEIKEFVKGTVAENAPIIPISALHGANVDVLLAAIEEFIPTPKRDPNKPPKMLVLRSFDVNKPGTPPEKLVGGVIGGSIVQGKLRVGDEIEIRPGVPYEEHGRIKYEPITTEITSLQAGGRFVEEAYPGGLVGVGTKLDPFLTKGDLMAGNVVGKPGQLPPVWDELTLEVHLLERVVGTEEELRVEPIKRREVLLLNVGTARTMGLVTGLGKDTVELKLQIPVCAEVGDRVAISRQVGSRWRLIGYGFIRE.

The tr-type G domain occupies 9–202; the sequence is QAEVNIGMVG…AIEEFIPTPK (194 aa). The interval 18-25 is G1; that stretch reads GHVDHGKT. Mg(2+) is bound by residues D21, T25, G46, and T48. Residue 21-26 coordinates GTP; sequence DHGKTT. The tract at residues 46–50 is G2; sequence GITIK. 4 residues coordinate Zn(2+): C61, C64, C73, and C76. The interval 90–93 is G3; that stretch reads DAPG. Residues 145-148 and 180-182 contribute to the GTP site; these read NKIE and SAL. The G4 stretch occupies residues 145–148; sequence NKIE. The interval 180–182 is G5; sequence SAL.

This sequence belongs to the TRAFAC class translation factor GTPase superfamily. Classic translation factor GTPase family. EIF2G subfamily. Heterotrimer composed of an alpha, a beta and a gamma chain. Mg(2+) is required as a cofactor.

It carries out the reaction GTP + H2O = GDP + phosphate + H(+). Functionally, eIF-2 functions in the early steps of protein synthesis by forming a ternary complex with GTP and initiator tRNA. This chain is Translation initiation factor 2 subunit gamma, found in Thermococcus kodakarensis (strain ATCC BAA-918 / JCM 12380 / KOD1) (Pyrococcus kodakaraensis (strain KOD1)).